Reading from the N-terminus, the 72-residue chain is Defensin-like protein 230 (72 aa).

A signal peptide spans 1–27; the sequence is MEKKSLACLSFLLLVLFVAQEIVVSEA. 4 cysteine pairs are disulfide-bonded: C30/C72, C41/C60, C45/C66, and C49/C68.

Belongs to the DEFL family.

It localises to the secreted. This is Defensin-like protein 230 (PI230) from Pisum sativum (Garden pea).